The following is a 423-amino-acid chain: UDP-N-acetylglucosamine 1-carboxyvinyltransferase 2 (423 aa).

Phosphoenolpyruvate is bound at residue 23 to 24 (KN). Residue arginine 93 participates in UDP-N-acetyl-alpha-D-glucosamine binding. The active-site Proton donor is cysteine 117. Cysteine 117 bears the 2-(S-cysteinyl)pyruvic acid O-phosphothioketal mark. Residues 122-126 (RPIDQ), aspartate 305, and isoleucine 327 contribute to the UDP-N-acetyl-alpha-D-glucosamine site.

This sequence belongs to the EPSP synthase family. MurA subfamily.

It is found in the cytoplasm. It catalyses the reaction phosphoenolpyruvate + UDP-N-acetyl-alpha-D-glucosamine = UDP-N-acetyl-3-O-(1-carboxyvinyl)-alpha-D-glucosamine + phosphate. It participates in cell wall biogenesis; peptidoglycan biosynthesis. Its function is as follows. Cell wall formation. Adds enolpyruvyl to UDP-N-acetylglucosamine. This is UDP-N-acetylglucosamine 1-carboxyvinyltransferase 2 from Listeria monocytogenes serovar 1/2a (strain ATCC BAA-679 / EGD-e).